The primary structure comprises 449 residues: Glycine receptor subunit alpha-2 (449 aa).

The N-terminal stretch at 1–27 is a signal peptide; it reads MTRPSVKLLTTLLACLMEMLNFRVSSG. At 28–255 the chain is on the extracellular side; the sequence is KDPDLLSSSS…FHLERQMGYY (228 aa). An N-linked (GlcNAc...) asparagine glycan is attached at Asn70. Residues Arg97 and Ser161 each coordinate glycine. A strychnine-binding site is contributed by Arg97. An intrachain disulfide couples Cys170 to Cys184. Positions 224 and 226 each coordinate Zn(2+). A disulfide bridge connects residues Cys230 and Cys241. Thr236 is a binding site for glycine. Residue His247 coordinates Zn(2+). The helical transmembrane segment at 256–276 threads the bilayer; the sequence is LIQMYIPSLLIVILSWVSFWI. Topologically, residues 277 to 282 are cytoplasmic; the sequence is NMDAAP. Residues 283-302 form a helical membrane-spanning segment; that stretch reads ARVALGITTVLTMTTQSSGS. The Extracellular portion of the chain corresponds to 303–313; that stretch reads RASLPKVSYVK. The chain crosses the membrane as a helical span at residues 314–334; sequence AIDIWMAVCLLFVFAALLEYA. Over 335-420 the chain is Cytoplasmic; the sequence is GVNFVSRQQK…RAKRIDTISR (86 aa). Residues 421–441 form a helical membrane-spanning segment; that stretch reads AAFPLAFLIFNVFYWITYKII. The Extracellular segment spans residues 442–449; the sequence is RHESARKD.

It belongs to the ligand-gated ion channel (TC 1.A.9) family.

It localises to the postsynaptic cell membrane. It is found in the synapse. Its subcellular location is the cell membrane. The protein localises to the cell projection. The enzyme catalyses chloride(in) = chloride(out). With respect to regulation, channel opening is triggered by extracellular glycine. Channel opening is also triggered by taurine and beta-alanine. Inhibited by strychnine. Functionally, subunit of heteromeric glycine-gated chloride channels. Plays a role in synaptic plasticity. Contributes to the generation of inhibitory postsynaptic currents, and is involved in the down-regulation of neuronal excitability. This Danio rerio (Zebrafish) protein is Glycine receptor subunit alpha-2 (glra2).